Here is a 251-residue protein sequence, read N- to C-terminus: Triosephosphate isomerase (251 aa).

Residue 9-11 (NWK) participates in substrate binding. The active-site Electrophile is the His96. Residue Glu167 is the Proton acceptor of the active site. Residues Gly173, Ser213, and 234-235 (GG) each bind substrate.

It belongs to the triosephosphate isomerase family. Homodimer.

It is found in the cytoplasm. The enzyme catalyses D-glyceraldehyde 3-phosphate = dihydroxyacetone phosphate. It participates in carbohydrate biosynthesis; gluconeogenesis. It functions in the pathway carbohydrate degradation; glycolysis; D-glyceraldehyde 3-phosphate from glycerone phosphate: step 1/1. In terms of biological role, involved in the gluconeogenesis. Catalyzes stereospecifically the conversion of dihydroxyacetone phosphate (DHAP) to D-glyceraldehyde-3-phosphate (G3P). In Phocaeicola vulgatus (strain ATCC 8482 / DSM 1447 / JCM 5826 / CCUG 4940 / NBRC 14291 / NCTC 11154) (Bacteroides vulgatus), this protein is Triosephosphate isomerase.